A 237-amino-acid chain; its full sequence is MADS-box protein GGM13 (237 aa).

The region spanning 1 to 61 (MGRGKIEIKR…GKLFEYSSAS (61 aa)) is the MADS-box domain. In terms of domain architecture, K-box spans 84-174 (NQHLYCEMTR…CRLLAEQQAA (91 aa)).

Expression specific for female reproductive structures: strong at the adaxial base of the cupules, where ovules will later develop, then in the outermost cell layer of the nucellus, in the inner envelope, and in the inner half of the middle envelope at late stage of ovule development.

The protein resides in the nucleus. Probable transcription factor. This is MADS-box protein GGM13 (GGM13) from Gnetum gnemon (Spanish joint-fir).